The chain runs to 375 residues: Guanine nucleotide-binding protein subunit beta (375 aa).

WD repeat units follow at residues 63 to 93, 105 to 135, 154 to 185, 202 to 233, 246 to 276, 293 to 323, and 339 to 369; these read GHTG…IVWN, LPCA…SIYN, GHKG…VLWD, GHTA…RLWD, GHEG…RLFD, GDIP…YVWD, and SHEG…KIWA.

It belongs to the WD repeat G protein beta family. In terms of assembly, g proteins are composed of 3 units, alpha, beta and gamma.

Functionally, guanine nucleotide-binding proteins (G proteins) are involved as a modulator or transducer in various transmembrane signaling systems. The beta and gamma chains are required for the GTPase activity, for replacement of GDP by GTP, and for G protein-effector interaction. The polypeptide is Guanine nucleotide-binding protein subunit beta (Nicotiana tabacum (Common tobacco)).